The primary structure comprises 376 residues: DNA-directed RNA polymerase subunit alpha (376 aa).

Positions 1 to 259 (MSDCSQNLLY…KHFSIFEKMD (259 aa)) are alpha N-terminal domain (alpha-NTD). The segment at 276-376 (KDDILHKLVL…DKIRSKNGKG (101 aa)) is alpha C-terminal domain (alpha-CTD).

It belongs to the RNA polymerase alpha chain family. Homodimer. The RNAP catalytic core consists of 2 alpha, 1 beta, 1 beta' and 1 omega subunit. When a sigma factor is associated with the core the holoenzyme is formed, which can initiate transcription.

It catalyses the reaction RNA(n) + a ribonucleoside 5'-triphosphate = RNA(n+1) + diphosphate. DNA-dependent RNA polymerase catalyzes the transcription of DNA into RNA using the four ribonucleoside triphosphates as substrates. The polypeptide is DNA-directed RNA polymerase subunit alpha (Chlamydia abortus (strain DSM 27085 / S26/3) (Chlamydophila abortus)).